We begin with the raw amino-acid sequence, 109 residues long: Spermidine export protein MdtI (109 aa).

4 helical membrane passes run 6 to 26, 36 to 56, 63 to 83, and 88 to 108; these read WWHAAFLFLAVVLDILANILL, WMGILSLIAVLGAFSALAQAV, IAYALWGAFGIIATVAAGWIM, and LNYKGWGGIALLLLGMVMIKM.

This sequence belongs to the drug/metabolite transporter (DMT) superfamily. Small multidrug resistance (SMR) (TC 2.A.7.1) family. MdtI subfamily. In terms of assembly, forms a complex with MdtJ.

The protein resides in the cell inner membrane. Functionally, catalyzes the excretion of spermidine. This Photorhabdus laumondii subsp. laumondii (strain DSM 15139 / CIP 105565 / TT01) (Photorhabdus luminescens subsp. laumondii) protein is Spermidine export protein MdtI.